Here is a 127-residue protein sequence, read N- to C-terminus: E3 ubiquitin-protein ligase PPP1R11 (127 aa).

2 disordered regions span residues 1 to 55 and 70 to 127; these read MAEA…EHMG and AFGE…PMQH. Alanine 2 carries the N-acetylalanine modification. A compositionally biased stretch (low complexity) spans 11–23; sequence ETVTETTVTVTTE. Residues 40 to 55 show a composition bias toward basic and acidic residues; it reads KKVEWSSDTVDNEHMG. The segment at 53–63 is atypical RING finger domain 1; sequence HMGRRSSKCCC. Phosphoserine occurs at positions 74 and 75. A Phosphothreonine modification is found at threonine 76. Serine 78 is subject to Phosphoserine. The atypical RING finger domain 2 stretch occupies residues 86–95; it reads CGHTHCVRGH. Residues 90–100 are compositionally biased toward basic residues; that stretch reads HCVRGHRKGRR. Residues 103 to 127 are compositionally biased toward pro residues; sequence TPGPTPTTPPQPPDPSQPPPGPMQH. Threonine 110 bears the Phosphothreonine mark.

As to quaternary structure, interacts with TLR2 and UBE2D2. In terms of processing, auto-ubiquitinated.

The enzyme catalyses S-ubiquitinyl-[E2 ubiquitin-conjugating enzyme]-L-cysteine + [acceptor protein]-L-lysine = [E2 ubiquitin-conjugating enzyme]-L-cysteine + N(6)-ubiquitinyl-[acceptor protein]-L-lysine.. The protein operates within protein modification; protein ubiquitination. Its function is as follows. Atypical E3 ubiquitin-protein ligase which ubiquitinates TLR2 at 'Lys-754' leading to its degradation by the proteasome. Plays a role in regulating inflammatory cytokine release and gram-positive bacterial clearance by functioning, in part, through the ubiquitination and degradation of TLR2. Inhibitor of protein phosphatase 1. The chain is E3 ubiquitin-protein ligase PPP1R11 (Ppp1r11) from Rattus norvegicus (Rat).